The following is a 182-amino-acid chain: Small ribosomal subunit protein uS4c (182 aa).

Residues 13–32 form a disordered region; sequence GLTSKRPRSGSDLKNPLRSG. The S4 RNA-binding domain maps to 82-143; the sequence is MRLDNILFRL…KQRSKALIQN (62 aa).

Belongs to the universal ribosomal protein uS4 family. In terms of assembly, part of the 30S ribosomal subunit. Contacts protein S5. The interaction surface between S4 and S5 is involved in control of translational fidelity.

It localises to the plastid. The protein localises to the chloroplast. Functionally, one of the primary rRNA binding proteins, it binds directly to 16S rRNA where it nucleates assembly of the body of the 30S subunit. In terms of biological role, with S5 and S12 plays an important role in translational accuracy. This is Small ribosomal subunit protein uS4c (rps4) from Scadoxus puniceus (Paintbrush lily).